Here is a 743-residue protein sequence, read N- to C-terminus: Dynein regulatory complex protein 1 homolog (743 aa).

Composition is skewed to acidic residues over residues 1 to 10 (MDDNEDELEE) and 19 to 28 (SVEEEEEVEP). Residues 1–34 (MDDNEDELEEHQELVSDGSVEEEEEVEPDLGPVD) form a disordered region. 2 coiled-coil regions span residues 175–332 (DQIE…VLMN) and 395–416 (KLHSNINDMESKAHQARLNNRE). A disordered region spans residues 599–620 (NRLQGAAGGQPDEKEHRSTGDT). A coiled-coil region spans residues 715–742 (KMRVQYDAEVVFLRRQNEELRHLLQKFT).

This sequence belongs to the DRC1 family.

The sequence is that of Dynein regulatory complex protein 1 homolog from Drosophila melanogaster (Fruit fly).